The primary structure comprises 267 residues: tRNA pseudouridine synthase A (267 aa).

Aspartate 51 (nucleophile) is an active-site residue. Tyrosine 109 serves as a coordination point for substrate.

Belongs to the tRNA pseudouridine synthase TruA family. As to quaternary structure, homodimer.

It carries out the reaction uridine(38/39/40) in tRNA = pseudouridine(38/39/40) in tRNA. Functionally, formation of pseudouridine at positions 38, 39 and 40 in the anticodon stem and loop of transfer RNAs. This Staphylococcus aureus (strain USA300) protein is tRNA pseudouridine synthase A.